We begin with the raw amino-acid sequence, 503 residues long: Maturase K (503 aa).

This sequence belongs to the intron maturase 2 family. MatK subfamily.

Its subcellular location is the plastid. The protein localises to the chloroplast. Its function is as follows. Usually encoded in the trnK tRNA gene intron. Probably assists in splicing its own and other chloroplast group II introns. The protein is Maturase K of Caragana arborescens (Siberian pea tree).